The primary structure comprises 78 residues: Sec-independent protein translocase protein TatA (78 aa).

A helical transmembrane segment spans residues M1–G21. A compositionally biased stretch (basic and acidic residues) spans M43–P55. The interval M43–I78 is disordered.

This sequence belongs to the TatA/E family. As to quaternary structure, the Tat system comprises two distinct complexes: a TatABC complex, containing multiple copies of TatA, TatB and TatC subunits, and a separate TatA complex, containing only TatA subunits. Substrates initially bind to the TatABC complex, which probably triggers association of the separate TatA complex to form the active translocon.

It localises to the cell inner membrane. Its function is as follows. Part of the twin-arginine translocation (Tat) system that transports large folded proteins containing a characteristic twin-arginine motif in their signal peptide across membranes. TatA could form the protein-conducting channel of the Tat system. In Nitrobacter winogradskyi (strain ATCC 25391 / DSM 10237 / CIP 104748 / NCIMB 11846 / Nb-255), this protein is Sec-independent protein translocase protein TatA.